Here is a 158-residue protein sequence, read N- to C-terminus: NAD(P)H-quinone oxidoreductase subunit J, chloroplastic (158 aa).

It belongs to the complex I 30 kDa subunit family. In terms of assembly, NDH is composed of at least 16 different subunits, 5 of which are encoded in the nucleus.

Its subcellular location is the plastid. The protein resides in the chloroplast thylakoid membrane. It catalyses the reaction a plastoquinone + NADH + (n+1) H(+)(in) = a plastoquinol + NAD(+) + n H(+)(out). The enzyme catalyses a plastoquinone + NADPH + (n+1) H(+)(in) = a plastoquinol + NADP(+) + n H(+)(out). Functionally, NDH shuttles electrons from NAD(P)H:plastoquinone, via FMN and iron-sulfur (Fe-S) centers, to quinones in the photosynthetic chain and possibly in a chloroplast respiratory chain. The immediate electron acceptor for the enzyme in this species is believed to be plastoquinone. Couples the redox reaction to proton translocation, and thus conserves the redox energy in a proton gradient. This chain is NAD(P)H-quinone oxidoreductase subunit J, chloroplastic, found in Gossypium barbadense (Sea Island cotton).